The sequence spans 220 residues: Ribosomal RNA large subunit methyltransferase E (220 aa).

Positions 60, 62, 92, 108, and 133 each coordinate S-adenosyl-L-methionine. Lys173 (proton acceptor) is an active-site residue. The disordered stretch occupies residues 197-220; it reads RKPKASRDKSSETFILGRQLKQPR.

It belongs to the class I-like SAM-binding methyltransferase superfamily. RNA methyltransferase RlmE family.

It is found in the cytoplasm. The catalysed reaction is uridine(2552) in 23S rRNA + S-adenosyl-L-methionine = 2'-O-methyluridine(2552) in 23S rRNA + S-adenosyl-L-homocysteine + H(+). Functionally, specifically methylates the uridine in position 2552 of 23S rRNA at the 2'-O position of the ribose in the fully assembled 50S ribosomal subunit. The polypeptide is Ribosomal RNA large subunit methyltransferase E (Burkholderia ambifaria (strain MC40-6)).